We begin with the raw amino-acid sequence, 783 residues long: Endonuclease MutS2 (783 aa).

Residue 328–335 (GPNTGGKT) coordinates ATP. The Smr domain occupies 708 to 783 (LDLRGKRYEE…GSGCTIATLG (76 aa)).

The protein belongs to the DNA mismatch repair MutS family. MutS2 subfamily. Homodimer. Binds to stalled ribosomes, contacting rRNA.

In terms of biological role, endonuclease that is involved in the suppression of homologous recombination and thus may have a key role in the control of bacterial genetic diversity. Its function is as follows. Acts as a ribosome collision sensor, splitting the ribosome into its 2 subunits. Detects stalled/collided 70S ribosomes which it binds and splits by an ATP-hydrolysis driven conformational change. Acts upstream of the ribosome quality control system (RQC), a ribosome-associated complex that mediates the extraction of incompletely synthesized nascent chains from stalled ribosomes and their subsequent degradation. Probably generates substrates for RQC. The chain is Endonuclease MutS2 from Streptococcus thermophilus (strain CNRZ 1066).